The chain runs to 197 residues: Isopentenyl-diphosphate Delta-isomerase (197 aa).

The Mn(2+) site is built by His-41 and His-48. One can recognise a Nudix hydrolase domain in the interval 46-183 (QLHRAFSVFL…AWFMTVLDAA (138 aa)). Residue Cys-83 is part of the active site. His-85 contacts Mn(2+). A Mg(2+)-binding site is contributed by Glu-103. Mn(2+)-binding residues include Glu-130 and Glu-132. Glu-132 is an active-site residue.

It belongs to the IPP isomerase type 1 family. Mg(2+) is required as a cofactor. Mn(2+) serves as cofactor.

Its subcellular location is the cytoplasm. The catalysed reaction is isopentenyl diphosphate = dimethylallyl diphosphate. The protein operates within isoprenoid biosynthesis; dimethylallyl diphosphate biosynthesis; dimethylallyl diphosphate from isopentenyl diphosphate: step 1/1. In terms of biological role, catalyzes the 1,3-allylic rearrangement of the homoallylic substrate isopentenyl (IPP) to its highly electrophilic allylic isomer, dimethylallyl diphosphate (DMAPP). The chain is Isopentenyl-diphosphate Delta-isomerase from Streptomyces griseus subsp. griseus (strain JCM 4626 / CBS 651.72 / NBRC 13350 / KCC S-0626 / ISP 5235).